Consider the following 581-residue polypeptide: Arginine--tRNA ligase (581 aa).

Residues 126-136 (PNLAKEMHVGH) carry the 'HIGH' region motif.

It belongs to the class-I aminoacyl-tRNA synthetase family. As to quaternary structure, monomer.

The protein resides in the cytoplasm. The enzyme catalyses tRNA(Arg) + L-arginine + ATP = L-arginyl-tRNA(Arg) + AMP + diphosphate. This Shewanella amazonensis (strain ATCC BAA-1098 / SB2B) protein is Arginine--tRNA ligase.